A 45-amino-acid polypeptide reads, in one-letter code: Mu-conotoxin-like Cal 12.1.2d (45 aa).

Intrachain disulfides connect cysteine 3/cysteine 16, cysteine 11/cysteine 28, cysteine 18/cysteine 33, and cysteine 27/cysteine 39. 6'-bromotryptophan is present on tryptophan 17. 4-hydroxyproline is present on proline 23. 2 positions are modified to 6'-bromotryptophan: tryptophan 37 and tryptophan 38. A 4-hydroxyproline modification is found at proline 40.

As to expression, expressed by the venom duct.

The protein localises to the secreted. Its function is as follows. Mu-conotoxins block voltage-gated sodium channels. This toxin reversibly blocks voltage-gated sodium channel in cephalopods, with no alteration in the voltage dependence of sodium conductance or on the kinetics of inactivation. This chain is Mu-conotoxin-like Cal 12.1.2d, found in Californiconus californicus (California cone).